The following is a 238-amino-acid chain: Ribonuclease PH (238 aa).

Residues Arg86 and 124 to 126 (GTR) contribute to the phosphate site.

This sequence belongs to the RNase PH family. Homohexameric ring arranged as a trimer of dimers.

The enzyme catalyses tRNA(n+1) + phosphate = tRNA(n) + a ribonucleoside 5'-diphosphate. Its function is as follows. Phosphorolytic 3'-5' exoribonuclease that plays an important role in tRNA 3'-end maturation. Removes nucleotide residues following the 3'-CCA terminus of tRNAs; can also add nucleotides to the ends of RNA molecules by using nucleoside diphosphates as substrates, but this may not be physiologically important. Probably plays a role in initiation of 16S rRNA degradation (leading to ribosome degradation) during starvation. This Proteus mirabilis (strain HI4320) protein is Ribonuclease PH.